The sequence spans 377 residues: MSNGIVIIGSGFAARQLVKNIRKQDASIPLTLIAADSMDEYNKPDLSHVISQGQRADDLTRQTAGEFAEQFNLRLFPHTWVTDIDAEAHVVKSQNNQWQYDKLVLATGASAFVPPVPGRELMLTLNSQQEYRACETQLRDARRVLIVGGGLIGSELAMDFCRAGKAVTLIDNAASILASLMPTEVSSRLQHRLTEMGVHLLLKSQLQGLEKTDSGILATLDRQRCIEVDAVIAATGLRPETALARRAGLTINRGVCVDSYLQTSNADIYALGDCAEINGQVLPFLQPIQLSAMVLAKNLLGNNTPLKLPAMLVKIKTPELPLHLAGETQRQDLRWQINTERQGMVARGVDDADQLRAFVVSEDRMKEAFGLLKTLSM.

The protein belongs to the FAD-dependent oxidoreductase family. Requires FAD as cofactor.

Its subcellular location is the cytoplasm. It carries out the reaction 2 reduced [nitric oxide reductase rubredoxin domain] + NAD(+) + H(+) = 2 oxidized [nitric oxide reductase rubredoxin domain] + NADH. It participates in nitrogen metabolism; nitric oxide reduction. One of at least two accessory proteins for anaerobic nitric oxide (NO) reductase. Reduces the rubredoxin moiety of NO reductase. This chain is Nitric oxide reductase FlRd-NAD(+) reductase, found in Escherichia coli O6:H1 (strain CFT073 / ATCC 700928 / UPEC).